Here is a 419-residue protein sequence, read N- to C-terminus: Tol-Pal system protein TolB (419 aa).

The signal sequence occupies residues 1–19 (MCNRIISLFLLLFTGQVIA).

It belongs to the TolB family. The Tol-Pal system is composed of five core proteins: the inner membrane proteins TolA, TolQ and TolR, the periplasmic protein TolB and the outer membrane protein Pal. They form a network linking the inner and outer membranes and the peptidoglycan layer.

The protein localises to the periplasm. Functionally, part of the Tol-Pal system, which plays a role in outer membrane invagination during cell division and is important for maintaining outer membrane integrity. In Legionella pneumophila (strain Paris), this protein is Tol-Pal system protein TolB.